Consider the following 268-residue polypeptide: GTP cyclohydrolase FolE2 (268 aa).

The protein belongs to the GTP cyclohydrolase IV family.

It carries out the reaction GTP + H2O = 7,8-dihydroneopterin 3'-triphosphate + formate + H(+). Its pathway is cofactor biosynthesis; 7,8-dihydroneopterin triphosphate biosynthesis; 7,8-dihydroneopterin triphosphate from GTP: step 1/1. Converts GTP to 7,8-dihydroneopterin triphosphate. The protein is GTP cyclohydrolase FolE2 of Paraburkholderia xenovorans (strain LB400).